Reading from the N-terminus, the 2442-residue chain is Centrosome-associated protein CEP250 (2442 aa).

4 coiled-coil regions span residues 95 to 158, 244 to 352, 395 to 1172, and 1243 to 2227; these read NLDE…KESQ, AQLL…TQVM, LTRR…EQQP, and SALH…KERL. Composition is skewed to basic and acidic residues over residues 1273 to 1289 and 1699 to 1715; these read LTDT…ELQD and LTTQ…EGKG. Disordered stretches follow at residues 1273–1308, 1699–1725, and 1820–1839; these read LTDT…EGKQ, LTTQ…GSLE, and EALQ…VKEK. The segment covering 1820–1831 has biased composition (low complexity); the sequence is EALQQEQQQAQG. Position 2138 is a phosphoserine (S2138). Residue T2218 is modified to Phosphothreonine. A disordered region spans residues 2223 to 2244; the sequence is EKERLHSPGATSTAELGSRGEQ. Residues S2229, S2252, and S2322 each carry the phosphoserine modification. Residues 2262–2376 are a coiled coil; sequence GMEKQSWRQR…RKQKQDYITR (115 aa). Disordered regions lie at residues 2307–2345 and 2416–2442; these read RRKL…KNSD and ESLT…AASR. Over residues 2328–2338 the composition is skewed to polar residues; that stretch reads ATASSPTQQDG. S2417 and S2421 each carry phosphoserine; by NEK2. Residues 2433–2442 are compositionally biased toward polar residues; it reads SPSTTQAASR.

In terms of assembly, monomer and homodimer. Forms a complex in vitro with both NEK2 kinase and the PPP1CC catalytic subunit of protein phosphatase 1 (PP1). Interacts with CEP135. Interacts with CROCC/rootletin. Interacts with CNTLN. Interacts with NIN (via C-terminus). Interacts with CCDC102B (via N-terminus); the interaction results in recruitment of CCDC102B to the proximal ends of centrioles. Differentially phosphorylated during cell cycle. Phosphorylation may regulate association/dissociation from centrosome. During M phase of mitosis, C-terminal part is phosphorylated by NEK2, suggesting that it may trigger the dissociation from the mitotic centrosome. Dephosphorylated in vitro by the PP1 phosphatase. Ubiquitously and weakly expressed.

It localises to the cytoplasm. The protein localises to the perinuclear region. Its subcellular location is the cytoskeleton. It is found in the microtubule organizing center. The protein resides in the centrosome. It localises to the centriole. The protein localises to the cilium basal body. Its subcellular location is the cell projection. It is found in the cilium. The protein resides in the photoreceptor outer segment. It localises to the photoreceptor inner segment. Functionally, plays an important role in centrosome cohesion during interphase. Recruits CCDC102B to the proximal ends of centrioles. Maintains centrosome cohesion by forming intercentriolar linkages. Accumulates at the proximal end of each centriole, forming supramolecular assemblies with viscous material properties that promote organelle cohesion. May be involved in ciliogenesis. This chain is Centrosome-associated protein CEP250 (CEP250), found in Homo sapiens (Human).